The primary structure comprises 357 residues: Isopenicillin-N N-acyltransferase (357 aa).

6-aminopenicillanate-binding residues include Asp-121 and Arg-310.

This sequence belongs to the peptidase C45 family. As to quaternary structure, the active form of the enzyme results from processing of the 40-kDa monomeric precursor to a heterodimer containing subunits of 11 and 29 kDa. Post-translationally, the pre-AAT protein is synthesized as 40 kDa precursor which is then self-processed into an 11 kDa (protein A) and a 29 kDa (protein B). The B protein carries AAT activity.

The protein resides in the peroxisome matrix. The catalysed reaction is isopenicillin N + phenylacetyl-CoA + H2O = penicillin G + L-2-aminoadipate + CoA + H(+). It participates in antibiotic biosynthesis; penicillin G biosynthesis; penicillin G from L-alpha-aminoadipate and L-cysteine and L-valine: step 3/3. Functionally, isopenicillin-N N-acyltransferase; part of the gene cluster that mediates the biosynthesis of penicillin, the world's most important antibiotic. AatA catalyzes the exchange of the alpha-aminoadipyl side chain of isopenicillin N for phenylacetic acid to yield penicillin. This step occurs in the peroxisomal matrix and the penM and paaT transporters are involved in the isopenicillin N and phenylacetic acid import into the peroxisome, respectively. The penicillin biosynthesis occurs via 3 enzymatic steps, the first corresponding to the production of the tripeptide N-[(5S)-5-amino-5-carboxypentanoyl]-L-cysteinyl-D-valine (LLD-ACV or ACV) by the NRPS acvA. The tripeptide ACV is then cyclized to isopenicillin N (IPN) by the isopenicillin N synthase ipnA that forms the beta-lactam nucleus. Finally, the alpha-aminoadipyl side chain is exchanged for phenylacetic acid by the isopenicillin N acyltransferase aatA to yield penicillin in the peroxisomal matrix. The chain is Isopenicillin-N N-acyltransferase from Penicillium chrysogenum (Penicillium notatum).